Reading from the N-terminus, the 291-residue chain is uncharacterized protein (291 aa).

Residues 5–19 (AFIG…MAGH) and Thr-97 each bind NAD(+). Residue Lys-172 is part of the active site. An NAD(+)-binding site is contributed by Lys-240.

The protein belongs to the HIBADH-related family.

This is an uncharacterized protein from Shewanella frigidimarina (strain NCIMB 400).